The primary structure comprises 116 residues: Methionine-R-sulfoxide reductase B1 (116 aa).

A MsrB domain is found at 1 to 106; sequence MSFCSFFGGE…FSSSLKFVPK (106 aa). Zn(2+)-binding residues include Cys-23, Cys-26, Cys-71, and Cys-74. The active-site Nucleophile is the Sec-95. Residue Sec-95 is a non-standard amino acid, selenocysteine.

This sequence belongs to the MsrB Met sulfoxide reductase family. Zn(2+) serves as cofactor. Truncated MSRB1/SEPX1 proteins produced by failed UGA/Sec decoding are ubiquitinated by the CRL2(FEM1C) E3 ubiquitin-protein ligase complex.

The protein resides in the cytoplasm. It localises to the nucleus. Its subcellular location is the cytoskeleton. The enzyme catalyses L-methionyl-[protein] + [thioredoxin]-disulfide + H2O = L-methionyl-(R)-S-oxide-[protein] + [thioredoxin]-dithiol. It catalyses the reaction [thioredoxin]-disulfide + L-methionine + H2O = L-methionine (R)-S-oxide + [thioredoxin]-dithiol. Functionally, methionine-sulfoxide reductase that specifically reduces methionine (R)-sulfoxide back to methionine. While in many cases, methionine oxidation is the result of random oxidation following oxidative stress, methionine oxidation is also a post-translational modification that takes place on specific residue. Acts as a regulator of actin assembly by reducing methionine (R)-sulfoxide mediated by MICALs (MICAL1, MICAL2 or MICAL3) on actin, thereby promoting filament repolymerization. Plays a role in innate immunity by reducing oxidized actin, leading to actin repolymerization in macrophages. This is Methionine-R-sulfoxide reductase B1 (Msrb1) from Mus musculus (Mouse).